A 316-amino-acid chain; its full sequence is Acetyl-coenzyme A carboxylase carboxyl transferase subunit alpha (316 aa).

The CoA carboxyltransferase C-terminal domain occupies 36-290; the sequence is KLEQKLDSLK…KQFLVEQLHI (255 aa).

Belongs to the AccA family. As to quaternary structure, acetyl-CoA carboxylase is a heterohexamer composed of biotin carboxyl carrier protein (AccB), biotin carboxylase (AccC) and two subunits each of ACCase subunit alpha (AccA) and ACCase subunit beta (AccD).

The protein localises to the cytoplasm. The catalysed reaction is N(6)-carboxybiotinyl-L-lysyl-[protein] + acetyl-CoA = N(6)-biotinyl-L-lysyl-[protein] + malonyl-CoA. Its pathway is lipid metabolism; malonyl-CoA biosynthesis; malonyl-CoA from acetyl-CoA: step 1/1. Its function is as follows. Component of the acetyl coenzyme A carboxylase (ACC) complex. First, biotin carboxylase catalyzes the carboxylation of biotin on its carrier protein (BCCP) and then the CO(2) group is transferred by the carboxyltransferase to acetyl-CoA to form malonyl-CoA. The chain is Acetyl-coenzyme A carboxylase carboxyl transferase subunit alpha from Protochlamydia amoebophila (strain UWE25).